A 115-amino-acid polypeptide reads, in one-letter code: Con-Ins T2 (115 aa).

The N-terminal stretch at 1-21 (MTTSFYFLLVALGLLLYVCQS) is a signal peptide. A propeptide spanning residues 22–29 (SFGNQHTR) is cleaved from the precursor. Intrachain disulfides connect Cys-38–Cys-101, Cys-50–Cys-114, and Cys-100–Cys-105. Glu-48 bears the 4-carboxyglutamate mark. A propeptide spans 53–94 (KRNDAGKKRGQASPLWQRGGSLSMLKARAKRNEAFHLQRAHR) (c peptide). Glu-98 carries the post-translational modification 4-carboxyglutamate. Glu-109 is modified (4-carboxyglutamate). Residue Cys-114 is modified to Cysteine amide.

The protein belongs to the insulin family. Heterodimer of A and B chains; disulfide-linked. Expressed by the venom gland.

The protein localises to the secreted. Its function is as follows. This venom insulin facilitates prey capture by rapidly inducing hypoglycemic shock. It is one of the smallest known insulin found in nature and lacks the C-terminal segment of the B chain that, in human insulin, mediates engagement of the insulin receptor (INSR) and assembly of the hormone's hexameric storage form. Despite lacking this segment, it both binds and activates human insulin receptor (long isoform (HIR-B)) with a high potency (EC(50)=15.5 nM). In vivo, intraperitoneal injection of this peptide into zebrafish lowers blood glucose with a lower potency than human insulin. In addition, when applied to water, this peptide reduces overall locomotor activity of zebrafish larvae, observed as a significant decrease in the percentage of time spent swimming and movement frequency. When tested on a mouse model of diabetes, this insulin also lowers blood glucose with a 10-fold lower potency than human insulin. The sequence is that of Con-Ins T2 from Conus tulipa (Fish-hunting cone snail).